The primary structure comprises 155 residues: MYKMQLLSCIALTLVLVANSAPTTSSSTKETQQQLEQLLLDLRLLLNGVNNYENPQLSRMLTFKFYTPKKATELTHLQCLPEELKLLEEVLYLAPNKNFHLTDIKELMSNINVTLLKLKGSETRFKCEYDDETATITEFLNKWITFCQSIFSTLT.

The first 20 residues, M1–S20, serve as a signal peptide directing secretion. T23 carries O-linked (GalNAc...) threonine glycosylation. An intrachain disulfide couples C79 to C127.

Belongs to the IL-2 family.

Its subcellular location is the secreted. Functionally, cytokine produced by activated CD4-positive helper T-cells and to a lesser extend activated CD8-positive T-cells and natural killer (NK) cells that plays pivotal roles in the immune response and tolerance. Binds to a receptor complex composed of either the high-affinity trimeric IL-2R (IL2RA/CD25, IL2RB/CD122 and IL2RG/CD132) or the low-affinity dimeric IL-2R (IL2RB and IL2RG). Interaction with the receptor leads to oligomerization and conformation changes in the IL-2R subunits resulting in downstream signaling starting with phosphorylation of JAK1 and JAK3. In turn, JAK1 and JAK3 phosphorylate the receptor to form a docking site leading to the phosphorylation of several substrates including STAT5. This process leads to activation of several pathways including STAT, phosphoinositide-3-kinase/PI3K and mitogen-activated protein kinase/MAPK pathways. Functions as a T-cell growth factor and can increase NK-cell cytolytic activity as well. Promotes strong proliferation of activated B-cells and subsequently immunoglobulin production. Plays a pivotal role in regulating the adaptive immune system by controlling the survival and proliferation of regulatory T-cells, which are required for the maintenance of immune tolerance. Moreover, participates in the differentiation and homeostasis of effector T-cell subsets, including Th1, Th2, Th17 as well as memory CD8-positive T-cells. This chain is Interleukin-2 (IL2), found in Halichoerus grypus (Gray seal).